Consider the following 121-residue polypeptide: Large ribosomal subunit protein uL18 (121 aa).

This sequence belongs to the universal ribosomal protein uL18 family. Part of the 50S ribosomal subunit; part of the 5S rRNA/L5/L18/L25 subcomplex. Contacts the 5S and 23S rRNAs.

Functionally, this is one of the proteins that bind and probably mediate the attachment of the 5S RNA into the large ribosomal subunit, where it forms part of the central protuberance. The chain is Large ribosomal subunit protein uL18 from Paraburkholderia xenovorans (strain LB400).